The following is an 86-amino-acid chain: Small ribosomal subunit protein bS20 (86 aa).

Residues 1-25 (MTNIKSQQKRNRTNERARLRNKSVK) are disordered.

Belongs to the bacterial ribosomal protein bS20 family.

Its function is as follows. Binds directly to 16S ribosomal RNA. The chain is Small ribosomal subunit protein bS20 from Mycobacterium leprae (strain Br4923).